Consider the following 211-residue polypeptide: ATP phosphoribosyltransferase (211 aa).

The protein belongs to the ATP phosphoribosyltransferase family. Short subfamily. In terms of assembly, heteromultimer composed of HisG and HisZ subunits.

The protein resides in the cytoplasm. It catalyses the reaction 1-(5-phospho-beta-D-ribosyl)-ATP + diphosphate = 5-phospho-alpha-D-ribose 1-diphosphate + ATP. It participates in amino-acid biosynthesis; L-histidine biosynthesis; L-histidine from 5-phospho-alpha-D-ribose 1-diphosphate: step 1/9. In terms of biological role, catalyzes the condensation of ATP and 5-phosphoribose 1-diphosphate to form N'-(5'-phosphoribosyl)-ATP (PR-ATP). Has a crucial role in the pathway because the rate of histidine biosynthesis seems to be controlled primarily by regulation of HisG enzymatic activity. The chain is ATP phosphoribosyltransferase from Pseudomonas entomophila (strain L48).